The sequence spans 594 residues: Arrestin domain-containing protein C584.15c (594 aa).

Residues 368 to 398 (NPQLQSGFTTPNLSRRNSSDFGPNSPVNIHS) show a composition bias toward polar residues. Disordered regions lie at residues 368 to 417 (NPQL…NSNA) and 531 to 594 (EATR…RGVR). The span at 404-417 (SGQQPSSPASNSNA) shows a compositional bias: low complexity. A compositionally biased stretch (polar residues) spans 534 to 552 (RPSSPTESVEIPSNTTTIA). Pro residues predominate over residues 565 to 574 (PSTPAPPLPS). Serine 584 is subject to Phosphoserine.

The protein belongs to the arrestin family.

The protein is Arrestin domain-containing protein C584.15c of Schizosaccharomyces pombe (strain 972 / ATCC 24843) (Fission yeast).